The chain runs to 459 residues: Cyclin-dependent kinase F-4 (459 aa).

The Protein kinase domain maps to 4–283 (FKMIKEVGDG…AAEVLQHTFF (280 aa)). ATP is bound by residues 10 to 18 (VGDGTFGSV) and lysine 33. Aspartate 125 functions as the Proton acceptor in the catalytic mechanism. Serine 151 carries the post-translational modification Phosphoserine. Threonine 156 is modified (phosphothreonine). Residues 310–397 (KGVSEHGMPR…RHSRSLPETG (88 aa)) are disordered. 2 stretches are compositionally biased toward polar residues: residues 322–346 (STGT…SKTG) and 366–375 (ESNNKLTTNR).

This sequence belongs to the protein kinase superfamily. CMGC Ser/Thr protein kinase family. CDC2/CDKX subfamily.

It catalyses the reaction L-seryl-[protein] + ATP = O-phospho-L-seryl-[protein] + ADP + H(+). The enzyme catalyses L-threonyl-[protein] + ATP = O-phospho-L-threonyl-[protein] + ADP + H(+). It carries out the reaction [DNA-directed RNA polymerase] + ATP = phospho-[DNA-directed RNA polymerase] + ADP + H(+). In Oryza sativa subsp. japonica (Rice), this protein is Cyclin-dependent kinase F-4 (CDKF-4).